The primary structure comprises 266 residues: Ankyrin repeat domain-containing protein 45 (266 aa).

Composition is skewed to acidic residues over residues M1–S11 and Q18–E32. The interval M1–A43 is disordered. ANK repeat units lie at residues V76–E105 and R109–A138.

The protein resides in the cytoplasm. It localises to the midbody. The protein localises to the midbody ring. It is found in the cleavage furrow. Its function is as follows. May play a role during cell division. This chain is Ankyrin repeat domain-containing protein 45, found in Homo sapiens (Human).